Here is a 427-residue protein sequence, read N- to C-terminus: F-box protein At2g16450 (427 aa).

Residues 1–45 form the F-box domain; that stretch reads MNPSPITIDLILEILSRLPAKSVRRFHCVSKRWASIFGSPYFKEL.

The protein is F-box protein At2g16450 of Arabidopsis thaliana (Mouse-ear cress).